The following is a 381-amino-acid chain: Chymosin (381 aa).

Positions M1–A16 are cleaved as a signal peptide. The propeptide at S17–S58 is activation peptide. A Peptidase A1 domain is found at Y74–A378. The active site involves D92. The stretch at D92–S102 is repeat 1. 2 disulfide bridges follow: C105/C110 and C265/C269. D274 is a catalytic residue. Repeat unit 2 spans residues D274–G284. C308 and C341 are joined by a disulfide.

Belongs to the peptidase A1 family. Monomer.

The enzyme catalyses Broad specificity similar to that of pepsin A. Clots milk by cleavage of a single 104-Ser-Phe-|-Met-Ala-107 bond in kappa-chain of casein.. Its activity is regulated as follows. Inhibited by pepstatin. Its function is as follows. Hydrolyzes a variety of proteins. This is Chymosin (CYM) from Callithrix jacchus (White-tufted-ear marmoset).